Reading from the N-terminus, the 489-residue chain is Bifunctional protein HldE (489 aa).

Residues 1–330 (MFDFDGLSNA…RKILPPAFLA (330 aa)) form a ribokinase region. 205 to 208 (NRKE) contributes to the ATP binding site. D275 is an active-site residue. Residues 358-489 (FTNGCFDILH…SLVKRAGGRA (132 aa)) are cytidylyltransferase.

In the N-terminal section; belongs to the carbohydrate kinase PfkB family. The protein in the C-terminal section; belongs to the cytidylyltransferase family. In terms of assembly, homodimer.

It catalyses the reaction D-glycero-beta-D-manno-heptose 7-phosphate + ATP = D-glycero-beta-D-manno-heptose 1,7-bisphosphate + ADP + H(+). The enzyme catalyses D-glycero-beta-D-manno-heptose 1-phosphate + ATP + H(+) = ADP-D-glycero-beta-D-manno-heptose + diphosphate. It participates in nucleotide-sugar biosynthesis; ADP-L-glycero-beta-D-manno-heptose biosynthesis; ADP-L-glycero-beta-D-manno-heptose from D-glycero-beta-D-manno-heptose 7-phosphate: step 1/4. The protein operates within nucleotide-sugar biosynthesis; ADP-L-glycero-beta-D-manno-heptose biosynthesis; ADP-L-glycero-beta-D-manno-heptose from D-glycero-beta-D-manno-heptose 7-phosphate: step 3/4. Functionally, catalyzes the phosphorylation of D-glycero-D-manno-heptose 7-phosphate at the C-1 position to selectively form D-glycero-beta-D-manno-heptose-1,7-bisphosphate. In terms of biological role, catalyzes the ADP transfer from ATP to D-glycero-beta-D-manno-heptose 1-phosphate, yielding ADP-D-glycero-beta-D-manno-heptose. The sequence is that of Bifunctional protein HldE from Nitrobacter hamburgensis (strain DSM 10229 / NCIMB 13809 / X14).